We begin with the raw amino-acid sequence, 472 residues long: 3-isopropylmalate dehydratase large subunit (472 aa).

[4Fe-4S] cluster-binding residues include cysteine 353, cysteine 414, and cysteine 417.

It belongs to the aconitase/IPM isomerase family. LeuC type 1 subfamily. Heterodimer of LeuC and LeuD. [4Fe-4S] cluster serves as cofactor.

It carries out the reaction (2R,3S)-3-isopropylmalate = (2S)-2-isopropylmalate. It functions in the pathway amino-acid biosynthesis; L-leucine biosynthesis; L-leucine from 3-methyl-2-oxobutanoate: step 2/4. In terms of biological role, catalyzes the isomerization between 2-isopropylmalate and 3-isopropylmalate, via the formation of 2-isopropylmaleate. The chain is 3-isopropylmalate dehydratase large subunit from Acinetobacter baumannii (strain ATCC 17978 / DSM 105126 / CIP 53.77 / LMG 1025 / NCDC KC755 / 5377).